Consider the following 543-residue polypeptide: CTP synthase (543 aa).

The interval 1–265 (MARYIFITGG…DDEVLAAFGI (265 aa)) is amidoligase domain. S13 contributes to the CTP binding site. Residue S13 coordinates UTP. 14 to 19 (SLGKGL) contributes to the ATP binding site. Y54 contributes to the L-glutamine binding site. D71 serves as a coordination point for ATP. Positions 71 and 139 each coordinate Mg(2+). CTP-binding positions include 146-148 (DIE), 186-191 (KTKPTQ), and K222. Residues 186 to 191 (KTKPTQ) and K222 contribute to the UTP site. Residue 238-240 (RDA) participates in ATP binding. Residues 291 to 542 (TIAIVGKYTG…IQAAVVQSRL (252 aa)) form the Glutamine amidotransferase type-1 domain. L-glutamine is bound at residue G353. The Nucleophile; for glutamine hydrolysis role is filled by C380. Residues 381-384 (FGMQ), E404, and R470 contribute to the L-glutamine site. Active-site residues include H515 and E517.

It belongs to the CTP synthase family. In terms of assembly, homotetramer.

It catalyses the reaction UTP + L-glutamine + ATP + H2O = CTP + L-glutamate + ADP + phosphate + 2 H(+). It carries out the reaction L-glutamine + H2O = L-glutamate + NH4(+). The enzyme catalyses UTP + NH4(+) + ATP = CTP + ADP + phosphate + 2 H(+). It functions in the pathway pyrimidine metabolism; CTP biosynthesis via de novo pathway; CTP from UDP: step 2/2. Allosterically activated by GTP, when glutamine is the substrate; GTP has no effect on the reaction when ammonia is the substrate. The allosteric effector GTP functions by stabilizing the protein conformation that binds the tetrahedral intermediate(s) formed during glutamine hydrolysis. Inhibited by the product CTP, via allosteric rather than competitive inhibition. Catalyzes the ATP-dependent amination of UTP to CTP with either L-glutamine or ammonia as the source of nitrogen. Regulates intracellular CTP levels through interactions with the four ribonucleotide triphosphates. This Nitrobacter winogradskyi (strain ATCC 25391 / DSM 10237 / CIP 104748 / NCIMB 11846 / Nb-255) protein is CTP synthase.